A 378-amino-acid chain; its full sequence is Lipid-A-disaccharide synthase (378 aa).

This sequence belongs to the LpxB family.

It carries out the reaction a lipid X + a UDP-2-N,3-O-bis[(3R)-3-hydroxyacyl]-alpha-D-glucosamine = a lipid A disaccharide + UDP + H(+). The protein operates within bacterial outer membrane biogenesis; LPS lipid A biosynthesis. In terms of biological role, condensation of UDP-2,3-diacylglucosamine and 2,3-diacylglucosamine-1-phosphate to form lipid A disaccharide, a precursor of lipid A, a phosphorylated glycolipid that anchors the lipopolysaccharide to the outer membrane of the cell. This chain is Lipid-A-disaccharide synthase, found in Pseudomonas aeruginosa (strain UCBPP-PA14).